Consider the following 376-residue polypeptide: MNFFKRLRLHTRLLLRSKFVLISLILLLNLGLLLGIQIYRDPAFPGSLISSAAYEFGLHKHGPYYNDNVDDLKRYTFMGLLTLPTSEHDVYFNATRVLVYKLKHHPETKSKYPVHVLVMKGVDEWKIERLRLDGAEIIMVDQIKTEDLIESGLSIGMGSYRYQYMFTKLSVFEQTQFDKVCILDSDLLVLKNMDDIFDTPYVYESPAEPDMFSFPIFKKPDDEEDYQFSDNFDAYGAPRSEFYPYLLGACDDRNPGHATPPEESETFNAGLMLVHPSSLHMHRIKKIARYPYMYDDARMMEQSLLNLAYNKYGWFPWTRLDFSYNGVWVTEEDLPYLRAAHGKFWEYDNTEFPQILTAEWHKAFGELLAFHDYVVE.

Residues 19 to 39 (FVLISLILLLNLGLLLGIQIY) traverse the membrane as a helical segment.

The protein to S.pombe SpAC5H10.12c.

It is found in the cytoplasm. The protein localises to the nucleus. The protein resides in the membrane. This is an uncharacterized protein from Schizosaccharomyces pombe (strain 972 / ATCC 24843) (Fission yeast).